The sequence spans 282 residues: NADPH-dependent 7-cyano-7-deazaguanine reductase (282 aa).

88–90 (IES) is a substrate binding site. An NADPH-binding site is contributed by 90–91 (SK). The active-site Thioimide intermediate is Cys190. The Proton donor role is filled by Asp197. Residue 229–230 (HE) participates in substrate binding. NADPH is bound at residue 258-259 (RG).

This sequence belongs to the GTP cyclohydrolase I family. QueF type 2 subfamily. As to quaternary structure, homodimer.

The protein resides in the cytoplasm. It carries out the reaction 7-aminomethyl-7-carbaguanine + 2 NADP(+) = 7-cyano-7-deazaguanine + 2 NADPH + 3 H(+). It functions in the pathway tRNA modification; tRNA-queuosine biosynthesis. Functionally, catalyzes the NADPH-dependent reduction of 7-cyano-7-deazaguanine (preQ0) to 7-aminomethyl-7-deazaguanine (preQ1). The sequence is that of NADPH-dependent 7-cyano-7-deazaguanine reductase from Escherichia coli O139:H28 (strain E24377A / ETEC).